A 272-amino-acid polypeptide reads, in one-letter code: UPF0759 protein YecE (272 aa).

It belongs to the UPF0759 family.

The chain is UPF0759 protein YecE (yecE) from Escherichia coli O157:H7.